Reading from the N-terminus, the 652-residue chain is Epithelial sodium channel subunit gamma (652 aa).

The Cytoplasmic segment spans residues 1–54 (MAPGEKIKAKIKKNLPVTGPQAPNIKELMQWYCLNTNTHGCRRIVVSRGRLRRL). Residues 55-75 (LWILFTLTAVALIFWQCALLI) traverse the membrane as a helical segment. Over 76–537 (SSFYTVSVSI…EQLLSNIGGQ (462 aa)) the chain is Extracellular. 8 disulfide bridges follow: Cys100-Cys286, Cys210-Cys217, Cys263-Cys270, Cys375-Cys460, Cys397-Cys456, Cys401-Cys452, Cys410-Cys437, and Cys412-Cys426. The tract at residues 137-224 (RKRREAQSWS…SDCAVYTFSS (88 aa)) is gating release of inhibition by proteolysis (GRIP); protease-sensitive region that is responsible for the proteolytic activation of the channel. N-linked (GlcNAc...) asparagine glycosylation occurs at Asn212. Asn500 carries an N-linked (GlcNAc...) asparagine glycan. The chain crosses the membrane as a helical span at residues 538-558 (LGLWMSCSVVCVIEIIEVFFI). At 559-652 (DSLSIIARHQ…LTDTQTTFPH (94 aa)) the chain is on the cytoplasmic side. The segment at 610-631 (SALSLPPAPGSQVPGTPPPRYN) is disordered. A PY motif; recruits WW domain-containing proteins and is thereby required for ubiquitination and inhibition of the channel by NEDD4 and NEDD4L motif is present at residues 626–630 (PPPRY).

It belongs to the amiloride-sensitive sodium channel (TC 1.A.6) family. SCNN1G subfamily. As to quaternary structure, component of the heterotrimeric epithelial sodium channel (ENaC) composed of an alpha/SCNN1A, a beta/SCNN1B and a gamma/SCNN1G subunit. An additional delta/SCNN1D subunit can replace the alpha/SCNN1A subunit to form an alternative channel with specific properties. Interacts with WWP1 (via WW domains). Interacts with WWP2 (via WW domains); inhibits the channel. Interacts with the full-length immature form of PCSK9 (pro-PCSK9); inhibits ENaC by promoting its proteasomal degradation. Interacts with BPIFA1; the interaction is indirect via SCNN1B and inhibits the proteolytic maturation of SCNN1A and SCNN1G and the activation of ENaC. Phosphorylated on serine and threonine residues. Aldosterone and insulin increase the basal level of phosphorylation. Post-translationally, ubiquitinated. Can be ubiquitinated at multiple sites and undergo monoubiquitination and polyubiquitination. Ubiquitination by NEDD4 or NEDD4L inhibits the ENaC channel through endocytosis, intracellular retention and degradation of its individual subunits. In terms of processing, ENaC is activated through the proteolytic maturation of its subunits. Furin cleaves the SCNN1G subunit first, followed by cleavage by prostasin (PRSS8), which results in a stepwise increase in the open probability of the channel due to the release of an inhibitory tract. BPIFA1, which is recruited by the SCNN1B subunit, prevents the proteolytic activation of ENaC. N-glycosylated. N-linked glycans are processed to complex type during ENaC complex assembly and transport to the plasma membrane.

The protein resides in the apical cell membrane. It carries out the reaction Na(+)(in) = Na(+)(out). Originally identified and characterized by its inhibition by the diuretic drug amiloride. Functionally, this is one of the three pore-forming subunits of the heterotrimeric epithelial sodium channel (ENaC), a critical regulator of sodium balance and fluid homeostasis. ENaC operates in epithelial tissues, where it mediates the electrodiffusion of sodium ions from extracellular fluid through the apical membrane of cells, with water following osmotically. It plays a key role in maintaining sodium homeostasis through electrogenic sodium reabsorption in the kidneys. Additionally, ENaC is essential for airway surface liquid homeostasis, which is crucial for proper mucus clearance. The polypeptide is Epithelial sodium channel subunit gamma (Bos taurus (Bovine)).